Consider the following 325-residue polypeptide: UPF0285 protein MM_0679 (325 aa).

This sequence belongs to the UPF0285 family.

The protein is UPF0285 protein MM_0679 of Methanosarcina mazei (strain ATCC BAA-159 / DSM 3647 / Goe1 / Go1 / JCM 11833 / OCM 88) (Methanosarcina frisia).